Here is a 195-residue protein sequence, read N- to C-terminus: ATP-dependent Clp protease proteolytic subunit (195 aa).

The Nucleophile role is filled by S98. H123 is a catalytic residue.

The protein belongs to the peptidase S14 family. In terms of assembly, fourteen ClpP subunits assemble into 2 heptameric rings which stack back to back to give a disk-like structure with a central cavity, resembling the structure of eukaryotic proteasomes.

Its subcellular location is the cytoplasm. The catalysed reaction is Hydrolysis of proteins to small peptides in the presence of ATP and magnesium. alpha-casein is the usual test substrate. In the absence of ATP, only oligopeptides shorter than five residues are hydrolyzed (such as succinyl-Leu-Tyr-|-NHMec, and Leu-Tyr-Leu-|-Tyr-Trp, in which cleavage of the -Tyr-|-Leu- and -Tyr-|-Trp bonds also occurs).. Its function is as follows. Cleaves peptides in various proteins in a process that requires ATP hydrolysis. Has a chymotrypsin-like activity. Plays a major role in the degradation of misfolded proteins. In Caldanaerobacter subterraneus subsp. tengcongensis (strain DSM 15242 / JCM 11007 / NBRC 100824 / MB4) (Thermoanaerobacter tengcongensis), this protein is ATP-dependent Clp protease proteolytic subunit.